We begin with the raw amino-acid sequence, 1111 residues long: Cellulose synthase-like protein D4 (1111 aa).

2 disordered regions span residues 1–26 (MASTPPQTSKKVRNNSGSGQTVKFAR) and 175–202 (DYSSGALPLPAPGKDQRGNNNNMSMMKR). A compositionally biased stretch (polar residues) spans 192 to 202 (GNNNNMSMMKR). 2 consecutive transmembrane segments (helical) span residues 266-286 (AIISPYRLLIVIRFVVLCFFL) and 297-317 (AIWLWLMSIICELWFGFSWIL). Residues D397 and D809 contribute to the active site. Helical transmembrane passes span 891–911 (LFLILYCFLPAFSLFSGQFIV), 914–934 (LSISFLVYLLMITICLIGLAV), 963–983 (LYAVVQGVLKVIAGIEISFTL), 1007–1027 (LMIPPIVIAMVNIIAIVVAFI), 1040–1060 (LIGGAFFSFWVLAHLYPFAKG), and 1070–1090 (TIVFVWAGLIAITISLLWTAI).

The protein belongs to the glycosyltransferase 2 family. Plant cellulose synthase-like D subfamily.

The protein localises to the golgi apparatus membrane. Functionally, thought to be a Golgi-localized beta-glycan synthase that polymerize the backbones of noncellulosic polysaccharides (hemicelluloses) of plant cell wall. This Arabidopsis thaliana (Mouse-ear cress) protein is Cellulose synthase-like protein D4 (CSLD4).